A 610-amino-acid polypeptide reads, in one-letter code: UvrABC system protein C (610 aa).

The GIY-YIG domain maps to 16–94 (HQPGVYRMYN…IKQYLPKYNV (79 aa)). The region spanning 204 to 239 (QQVLKQLIEKMEVASQQLRFEDAAKFRDQIQAIRRV) is the UVR domain.

It belongs to the UvrC family. As to quaternary structure, interacts with UvrB in an incision complex.

The protein localises to the cytoplasm. The UvrABC repair system catalyzes the recognition and processing of DNA lesions. UvrC both incises the 5' and 3' sides of the lesion. The N-terminal half is responsible for the 3' incision and the C-terminal half is responsible for the 5' incision. The chain is UvrABC system protein C from Vibrio parahaemolyticus serotype O3:K6 (strain RIMD 2210633).